Consider the following 714-residue polypeptide: NCK-interacting protein with SH3 domain (714 aa).

An SH3 domain is found at 1–58 (MYRALYAFRSAEPNAMAFAAGETFLVLERSSTHWWLAARARSGETGYVPPAYLHRLQG). Disordered stretches follow at residues 103-126 (TLSR…DHHL) and 139-298 (RTGF…AAET). Positions 106–121 (RRGTSASSATVMTPST) are enriched in polar residues. Serine 120 is subject to Phosphoserine. A Nuclear localization signal motif is present at residues 168–185 (RRAAPTTPPPPVKRRDRE). Residue threonine 174 is modified to Phosphothreonine. Low complexity predominate over residues 200-215 (SGGSSVSSGSSASSTS). Polar residues predominate over residues 216–226 (MDTLYTGSSPS). Pro residues predominate over residues 252-263 (QPSPSKAPSPEP). Phosphoserine is present on residues serine 260, serine 286, and serine 673.

As to quaternary structure, associates with the intermediate filaments, vimentin and desmin. Binds the first and third SH3 domains of NCK. Binds the proline-rich domains of N-WASP through its SH3 domain. Similarly, binds diaphanous protein homolog 1 (DRF1). Binds the SH3 domains of GRB2 through its proline-rich domains. Interacts with FASLG.

The protein localises to the nucleus. In terms of biological role, has an important role in stress fiber formation induced by active diaphanous protein homolog 1 (DRF1). Induces microspike formation, in vivo. In vitro, stimulates N-WASP-induced ARP2/3 complex activation in the absence of CDC42. May play an important role in the maintenance of sarcomere and/or in the assembly of myofibrils into sarcomeres. Implicated in regulation of actin polymerization and cell adhesion. This is NCK-interacting protein with SH3 domain (Nckipsd) from Mus musculus (Mouse).